We begin with the raw amino-acid sequence, 886 residues long: Microsomal triacylglycerol transfer protein (886 aa).

The signal sequence occupies residues 1-27; that stretch reads MENKNKKCLRTLLLLALFLGLLEDGKT. Positions 30-653 constitute a Vitellogenin domain; that stretch reads IAPNSQQIFK…SQASSFKLGI (624 aa). 4 N-linked (GlcNAc...) asparagine glycosylation sites follow: Asn358, Asn484, Asn502, and Asn616.

The protein resides in the endoplasmic reticulum. The protein localises to the golgi apparatus. It catalyses the reaction a 1,2-diacyl-sn-glycero-3-phosphocholine(in) = a 1,2-diacyl-sn-glycero-3-phosphocholine(out). The catalysed reaction is a 1,2-diacyl-sn-glycero-3-phosphoethanolamine(in) = a 1,2-diacyl-sn-glycero-3-phosphoethanolamine(out). Functionally, catalyzes the transport of phospholipids such as phosphatidylethanolamine (1,2-diacyl-sn-glycero-3-phosphoethanolamine) and phosphatidylcholine (1,2-diacyl-sn-glycero-3-phosphocholine) between membranes. Required for the assembly and secretion of plasma lipoproteins that contain apolipoprotein B. The protein is Microsomal triacylglycerol transfer protein of Drosophila melanogaster (Fruit fly).